Here is a 1486-residue protein sequence, read N- to C-terminus: Chromosome partition protein MukB (1486 aa).

Position 34–41 (34–41 (GGNGAGKS)) interacts with ATP. Coiled coils occupy residues 326–418 (LEAD…QYNQ), 444–480 (LETF…QAYQ), and 509–603 (RHLA…RAPV). The flexible hinge stretch occupies residues 666–783 (PGGSEDQRLN…EVPLFGRAAR (118 aa)). Coiled-coil stretches lie at residues 835-923 (EAEI…AKLE), 977-1115 (EMLS…TAKA), and 1209-1266 (VEAI…QNVS).

This sequence belongs to the SMC family. MukB subfamily. As to quaternary structure, homodimerization via its hinge domain. Binds to DNA via its C-terminal region. Interacts, and probably forms a ternary complex, with MukE and MukF via its C-terminal region. The complex formation is stimulated by calcium or magnesium. Interacts with tubulin-related protein FtsZ.

It is found in the cytoplasm. Its subcellular location is the nucleoid. Functionally, plays a central role in chromosome condensation, segregation and cell cycle progression. Functions as a homodimer, which is essential for chromosome partition. Involved in negative DNA supercoiling in vivo, and by this means organize and compact chromosomes. May achieve or facilitate chromosome segregation by condensation DNA from both sides of a centrally located replisome during cell division. This is Chromosome partition protein MukB from Escherichia coli O6:K15:H31 (strain 536 / UPEC).